The primary structure comprises 1173 residues: DNA polymerase catalytic subunit (1173 aa).

Disordered stretches follow at residues 554–625 (PSLP…SASG) and 1123–1144 (EGPG…PPRK). The span at 564–578 (GGDGAGLEGGDGGTA) shows a compositional bias: gly residues. Over residues 591 to 606 (DGEDEDDPEGGDEGEN) the composition is skewed to acidic residues. Residues 607–618 (GECRENGLEKEG) show a composition bias toward basic and acidic residues. Residues 1123-1138 (EGPGRGEGLGVGGGEG) show a composition bias toward gly residues.

The protein belongs to the DNA polymerase type-B family.

It is found in the host nucleus. The catalysed reaction is DNA(n) + a 2'-deoxyribonucleoside 5'-triphosphate = DNA(n+1) + diphosphate. In Rattus, this protein is DNA polymerase catalytic subunit (UL54).